The primary structure comprises 363 residues: DNA replication and repair protein RecF (363 aa).

ATP is bound at residue 30 to 37; sequence GINGSGKS.

This sequence belongs to the RecF family.

It is found in the cytoplasm. The RecF protein is involved in DNA metabolism; it is required for DNA replication and normal SOS inducibility. RecF binds preferentially to single-stranded, linear DNA. It also seems to bind ATP. The polypeptide is DNA replication and repair protein RecF (Pseudoalteromonas atlantica (strain T6c / ATCC BAA-1087)).